A 160-amino-acid chain; its full sequence is Thy-1 membrane glycoprotein (160 aa).

Residues 1–19 form the signal peptide; it reads MNPTVSIAVILTVLQAAHC. Gln20 carries the pyrrolidone carboxylic acid modification. The Ig-like V-type domain occupies 20–120; it reads QMIRDLSACL…YTGNQIKNIT (101 aa). Cystine bridges form between Cys28–Cys129 and Cys38–Cys103. Asn42, Asn78, and Asn118 each carry an N-linked (GlcNAc...) asparagine glycan. Residue Cys129 is the site of GPI-anchor amidated cysteine attachment. A propeptide spans 130 to 160 (removed in mature form); the sequence is VRLSLLIQNTSWLLLLLLSLPLLQAVDFVSL. Residue Asn138 is glycosylated (N-linked (GlcNAc...) asparagine).

Post-translationally, the N-terminus is blocked. Forebrain, cerebellum and tectum.

It localises to the cell membrane. In terms of biological role, may play a role in cell-cell or cell-ligand interactions during synaptogenesis and other events in the brain. This chain is Thy-1 membrane glycoprotein (THY1), found in Gallus gallus (Chicken).